Consider the following 286-residue polypeptide: MKVLLELLLGYSVLILAHELPYLPSTRHPPKEELPYWCTYVKNCDFCWDCQNDICKNKITNESISINSIVNCRVTRDSPSQSCFYEISVKMPNHHSMECSHPRPYTGNEIFMEKWGGGGDYWPIIIRHCCFYLVFSIAFVGYIVFVYNKNLHLNTTMKLLALLSILIWLSQPALNRPLSIFYMKQNLPRTYTPPVRELEYWCTYAKHCDFCWTCKDGMCKNKVFRDHPIITQNDYIVNCTVSRWHDRCMYEAHFRIHYQHNMNCSQPKDLEWFIELKRHVINQDDL.

Residues 1–17 (MKVLLELLLGYSVLILA) traverse the membrane as a helical segment. A glycan (N-linked (GlcNAc...) asparagine; by host) is linked at N61. Helical transmembrane passes span 128–148 (HCCF…FVYN) and 153–173 (LNTT…SQPA). N238 and N263 each carry an N-linked (GlcNAc...) asparagine; by host glycan.

This sequence belongs to the asfivirus MGF 110 family.

The protein resides in the host membrane. In terms of biological role, plays a role in virus cell tropism, and may be required for efficient virus replication in macrophages. The protein is Protein MGF 360-3L of African swine fever virus (isolate Tick/Malawi/Lil 20-1/1983) (ASFV).